The following is a 519-amino-acid chain: Protein nucleotidyltransferase YdiU (519 aa).

Residues Gly101, Gly103, Arg104, Lys124, Asp136, Gly137, Arg194, and Arg201 each contribute to the ATP site. The Proton acceptor role is filled by Asp271. Mg(2+) is bound by residues Asn272 and Asp281. Asp281 contacts ATP.

It belongs to the SELO family. Mg(2+) serves as cofactor. Requires Mn(2+) as cofactor.

The enzyme catalyses L-seryl-[protein] + ATP = 3-O-(5'-adenylyl)-L-seryl-[protein] + diphosphate. The catalysed reaction is L-threonyl-[protein] + ATP = 3-O-(5'-adenylyl)-L-threonyl-[protein] + diphosphate. It carries out the reaction L-tyrosyl-[protein] + ATP = O-(5'-adenylyl)-L-tyrosyl-[protein] + diphosphate. It catalyses the reaction L-histidyl-[protein] + UTP = N(tele)-(5'-uridylyl)-L-histidyl-[protein] + diphosphate. The enzyme catalyses L-seryl-[protein] + UTP = O-(5'-uridylyl)-L-seryl-[protein] + diphosphate. The catalysed reaction is L-tyrosyl-[protein] + UTP = O-(5'-uridylyl)-L-tyrosyl-[protein] + diphosphate. Functionally, nucleotidyltransferase involved in the post-translational modification of proteins. It can catalyze the addition of adenosine monophosphate (AMP) or uridine monophosphate (UMP) to a protein, resulting in modifications known as AMPylation and UMPylation. The chain is Protein nucleotidyltransferase YdiU from Azoarcus sp. (strain BH72).